Reading from the N-terminus, the 199-residue chain is MTDLYAEALATFATLYAEAQNSAEIEASAMTVATANLDGRPSARTVLLKAFDARGFVFYTHLDSAKGRDLQTHPQAALLFLWRSLREAGIQVRIEGGVQLVSADESDAYFASRPRMSQIGAWASLQSQTLGSREEFEAAIAKVEATFDGRDVPRPDGWGGFRVVPQAFEFWYGAKFRLHERWRYEADAASHWSKRMLYP.

FMN is bound by residues 44-49 (RTVLLK), 59-60 (YT), Lys-66, and Gln-91. Lys-49 serves as a coordination point for substrate. 3 residues coordinate substrate: Tyr-109, Arg-113, and Ser-117. Residues 126 to 127 (QS) and Trp-171 contribute to the FMN site. 177-179 (RLH) serves as a coordination point for substrate. Position 181 (Arg-181) interacts with FMN.

The protein belongs to the pyridoxamine 5'-phosphate oxidase family. As to quaternary structure, homodimer. FMN is required as a cofactor.

The enzyme catalyses pyridoxamine 5'-phosphate + O2 + H2O = pyridoxal 5'-phosphate + H2O2 + NH4(+). It catalyses the reaction pyridoxine 5'-phosphate + O2 = pyridoxal 5'-phosphate + H2O2. The protein operates within cofactor metabolism; pyridoxal 5'-phosphate salvage; pyridoxal 5'-phosphate from pyridoxamine 5'-phosphate: step 1/1. It functions in the pathway cofactor metabolism; pyridoxal 5'-phosphate salvage; pyridoxal 5'-phosphate from pyridoxine 5'-phosphate: step 1/1. In terms of biological role, catalyzes the oxidation of either pyridoxine 5'-phosphate (PNP) or pyridoxamine 5'-phosphate (PMP) into pyridoxal 5'-phosphate (PLP). In Xanthomonas campestris pv. campestris (strain 8004), this protein is Pyridoxine/pyridoxamine 5'-phosphate oxidase.